Reading from the N-terminus, the 217-residue chain is Protein GrpE (217 aa).

The protein belongs to the GrpE family. In terms of assembly, homodimer.

The protein localises to the cytoplasm. Functionally, participates actively in the response to hyperosmotic and heat shock by preventing the aggregation of stress-denatured proteins, in association with DnaK and GrpE. It is the nucleotide exchange factor for DnaK and may function as a thermosensor. Unfolded proteins bind initially to DnaJ; upon interaction with the DnaJ-bound protein, DnaK hydrolyzes its bound ATP, resulting in the formation of a stable complex. GrpE releases ADP from DnaK; ATP binding to DnaK triggers the release of the substrate protein, thus completing the reaction cycle. Several rounds of ATP-dependent interactions between DnaJ, DnaK and GrpE are required for fully efficient folding. The chain is Protein GrpE from Mycoplasma genitalium (strain ATCC 33530 / DSM 19775 / NCTC 10195 / G37) (Mycoplasmoides genitalium).